Consider the following 220-residue polypeptide: CASP-like protein 1E1 (220 aa).

The Cytoplasmic segment spans residues 1–57 (METPTPRVKPGFNGVGVGMGSSVNGSSRRAGYYMGPAGAVAVAGGGRAAAAAPVDGC). A helical membrane pass occupies residues 58-78 (SVALRVFVLAATLVSAVVMGV). Residues 79–108 (DRQTSTIRITVTDALPPLEVPLTANWSYSS) are Extracellular-facing. An N-linked (GlcNAc...) asparagine glycan is attached at Asn103. A helical membrane pass occupies residues 109-129 (AFVYFVVANAMVCLFSAAALA). Over 130–144 (ACRSRAAMVPVMVGD) the chain is Cytoplasmic. Residues 145–165 (LLALALLYSAVGAAAEFGILG) form a helical membrane-spanning segment. The Extracellular portion of the chain corresponds to 166 to 187 (ERGNSHVRWPKVCNVYGRFCER). Residues 188–208 (AMAAVIVSLIAAFANLVLLML) form a helical membrane-spanning segment. Residues 209 to 220 (NILTIHKSSSYY) lie on the Cytoplasmic side of the membrane.

The protein belongs to the Casparian strip membrane proteins (CASP) family. As to quaternary structure, homodimer and heterodimers.

It is found in the cell membrane. The sequence is that of CASP-like protein 1E1 from Zea mays (Maize).